The sequence spans 278 residues: Pantothenate synthetase (278 aa).

Position 31–38 (31–38) interacts with ATP; that stretch reads MGALHEGH. Histidine 38 functions as the Proton donor in the catalytic mechanism. Glutamine 62 contributes to the (R)-pantoate binding site. Glutamine 62 contributes to the beta-alanine binding site. ATP is bound at residue 148–151; it reads GEKD. Position 154 (glutamine 154) interacts with (R)-pantoate. ATP contacts are provided by residues leucine 177 and 185 to 188; that span reads MSSR.

Belongs to the pantothenate synthetase family. In terms of assembly, homodimer.

Its subcellular location is the cytoplasm. It catalyses the reaction (R)-pantoate + beta-alanine + ATP = (R)-pantothenate + AMP + diphosphate + H(+). It functions in the pathway cofactor biosynthesis; (R)-pantothenate biosynthesis; (R)-pantothenate from (R)-pantoate and beta-alanine: step 1/1. In terms of biological role, catalyzes the condensation of pantoate with beta-alanine in an ATP-dependent reaction via a pantoyl-adenylate intermediate. This chain is Pantothenate synthetase, found in Acidiphilium cryptum (strain JF-5).